A 430-amino-acid chain; its full sequence is Histidine--tRNA ligase, chloroplastic (430 aa).

This sequence belongs to the class-II aminoacyl-tRNA synthetase family.

It is found in the plastid. It localises to the chloroplast. The enzyme catalyses tRNA(His) + L-histidine + ATP = L-histidyl-tRNA(His) + AMP + diphosphate + H(+). The protein is Histidine--tRNA ligase, chloroplastic of Pyropia yezoensis (Susabi-nori).